A 751-amino-acid polypeptide reads, in one-letter code: Trehalose phosphorylase (751 aa).

Positions Met-1–Ser-26 are excised as a propeptide. A disordered region spans residues Met-1 to Gln-28.

The protein belongs to the glycosyltransferase group 1 family. Glycosyltransferase 4 subfamily. As to quaternary structure, homodimer. In terms of tissue distribution, expressed in mycelia, stipes and pilei.

The enzyme catalyses alpha,alpha-trehalose + phosphate = alpha-D-glucose + alpha-D-glucose 1-phosphate. Functionally, reversibly catalyzes the synthesis and degradation of trehalose from glucose and alpha-D-glucose 1-phosphate. The equilibrium lies in the direction of trehalose synthesis. The protein is Trehalose phosphorylase of Pleurotus sajor-caju (Oyster mushroom).